A 128-amino-acid polypeptide reads, in one-letter code: MYDNLKSLGITNPEEIDRYSLRQEANNDILKIYFQKDKGEFFAKSVKFKYPRQRKTVVADGIGQGYKEVQEISPNLRYIIDELDQICQRDRSEVDLKRKILDDLRHLESVVTNKISEIEADLEKLTRK.

This sequence belongs to the UPF0325 family.

This Escherichia fergusonii (strain ATCC 35469 / DSM 13698 / CCUG 18766 / IAM 14443 / JCM 21226 / LMG 7866 / NBRC 102419 / NCTC 12128 / CDC 0568-73) protein is UPF0325 protein YaeH.